We begin with the raw amino-acid sequence, 700 residues long: MTMFNTIKREFQYGNQQVVIETGRIARQANSILVHMGGVTVLVAAVVKSDAKEGQNFFPLTVNYQEKMYAAGKIPGAYGKREGRASESETLTSRLIDRPIRPLFPEGYVNEIQITATVVSSDKTQSADIAALIGASAALAISDAPFNGPVAAARVGFINGEYVLNPTLEELKESDLDLVVAGTKSAVLMVESEAAELSEDQMLGAVLYGHQQQQIVIDNIASMAAEIGTAKQQYTAPVRDQALETGMKEQFGAQVSDAYTITDKQARYSKLNEIKDAAIVALAGDAESESYSDTVSELKEIYNDLKYRTVRDNILSGKPRIDGRDLETVRALDVQVGVLPFTHGSALFTRGETQALVTTTLGNTRDVNMIDSLAGTIRDHFMLHYNFPHFSVGETGREGIPKRREIGHGRLARRGVQAMLPDSDRFPYVIRVVSEITESNGSSSMASVCGASLALMDAGVPIKAPVAGIAMGLVKEGERFAVLSDILGDEDHLGDMDFKVAGSKDGITALQMDIKIEGITPDIMEQALKQAHAGRIHILDAMNKVLPESRTEINAHAPNYAVIEINPDKIRDVIGKGGATIRQLTEETGAVIDIDDAGTIRIFGENKAATKAAIAKIEAITAEVEVGKTYEGTVARIVDFGAFVNVLPNTDGLVHISQIADERVENVSDYLKEGQIVKVLVQDVDNRGRIKLTMKGIEQS.

The Mg(2+) site is built by Asp-491 and Asp-497. Positions 558–617 (PNYAVIEINPDKIRDVIGKGGATIRQLTEETGAVIDIDDAGTIRIFGENKAATKAAIAKI) constitute a KH domain. In terms of domain architecture, S1 motif spans 627-695 (GKTYEGTVAR…NRGRIKLTMK (69 aa)).

Belongs to the polyribonucleotide nucleotidyltransferase family. As to quaternary structure, component of the RNA degradosome, which is a multiprotein complex involved in RNA processing and mRNA degradation. Mg(2+) is required as a cofactor.

The protein resides in the cytoplasm. It catalyses the reaction RNA(n+1) + phosphate = RNA(n) + a ribonucleoside 5'-diphosphate. In terms of biological role, involved in mRNA degradation. Catalyzes the phosphorolysis of single-stranded polyribonucleotides processively in the 3'- to 5'-direction. The sequence is that of Polyribonucleotide nucleotidyltransferase from Psychrobacter arcticus (strain DSM 17307 / VKM B-2377 / 273-4).